Reading from the N-terminus, the 338-residue chain is tRNA-specific 2-thiouridylase MnmA (338 aa).

Residues 6–13 (ALSGGVDS) and M32 each bind ATP. C92 serves as the catalytic Nucleophile. C92 and C186 form a disulfide bridge. G116 is a binding site for ATP. The tract at residues 134-136 (KDQ) is interaction with tRNA. Residue C186 is the Cysteine persulfide intermediate of the active site. The interaction with tRNA stretch occupies residues 288 to 289 (RY).

The protein belongs to the MnmA/TRMU family.

The protein resides in the cytoplasm. It carries out the reaction S-sulfanyl-L-cysteinyl-[protein] + uridine(34) in tRNA + AH2 + ATP = 2-thiouridine(34) in tRNA + L-cysteinyl-[protein] + A + AMP + diphosphate + H(+). Its function is as follows. Catalyzes the 2-thiolation of uridine at the wobble position (U34) of tRNA, leading to the formation of s(2)U34. In Campylobacter fetus subsp. fetus (strain 82-40), this protein is tRNA-specific 2-thiouridylase MnmA.